Reading from the N-terminus, the 442-residue chain is tRNA-2-methylthio-N(6)-dimethylallyladenosine synthase (442 aa).

The MTTase N-terminal domain occupies 3 to 120; sequence KKLYIETHGC…LPEMIDAARV (118 aa). [4Fe-4S] cluster-binding residues include cysteine 12, cysteine 49, cysteine 83, cysteine 157, cysteine 161, and cysteine 164. Residues 143–375 enclose the Radical SAM core domain; sequence RVDGPSAYVS…QHRLNQQGFE (233 aa). The TRAM domain occupies 378-442; it reads RQMVGSIQRI…PHSLRGSLLQ (65 aa).

The protein belongs to the methylthiotransferase family. MiaB subfamily. Monomer. [4Fe-4S] cluster is required as a cofactor.

Its subcellular location is the cytoplasm. It catalyses the reaction N(6)-dimethylallyladenosine(37) in tRNA + (sulfur carrier)-SH + AH2 + 2 S-adenosyl-L-methionine = 2-methylsulfanyl-N(6)-dimethylallyladenosine(37) in tRNA + (sulfur carrier)-H + 5'-deoxyadenosine + L-methionine + A + S-adenosyl-L-homocysteine + 2 H(+). Catalyzes the methylthiolation of N6-(dimethylallyl)adenosine (i(6)A), leading to the formation of 2-methylthio-N6-(dimethylallyl)adenosine (ms(2)i(6)A) at position 37 in tRNAs that read codons beginning with uridine. The sequence is that of tRNA-2-methylthio-N(6)-dimethylallyladenosine synthase from Pseudomonas syringae pv. syringae (strain B728a).